Reading from the N-terminus, the 773-residue chain is Phenylalanine--tRNA ligase beta subunit (773 aa).

Residues Leu-39–Asn-150 enclose the tRNA-binding domain. Residues Lys-391–Ser-467 form the B5 domain. Residues Asp-445, Asp-451, Glu-454, and Glu-455 each contribute to the Mg(2+) site. Residues Ser-682–Arg-773 form the FDX-ACB domain.

Belongs to the phenylalanyl-tRNA synthetase beta subunit family. Type 1 subfamily. In terms of assembly, tetramer of two alpha and two beta subunits. Mg(2+) serves as cofactor.

It localises to the cytoplasm. It carries out the reaction tRNA(Phe) + L-phenylalanine + ATP = L-phenylalanyl-tRNA(Phe) + AMP + diphosphate + H(+). The protein is Phenylalanine--tRNA ligase beta subunit of Campylobacter jejuni (strain RM1221).